Consider the following 234-residue polypeptide: Filarial antigen Av33 (234 aa).

The first 17 residues, M1 to G17, serve as a signal peptide directing secretion. Cysteines 135 and 230 form a disulfide. Positions T204–Y234 are disordered. A compositionally biased stretch (low complexity) spans T211–P220.

This sequence belongs to the protease inhibitor I33 family.

It is found in the secreted. Aspartyl protease inhibitor. The sequence is that of Filarial antigen Av33 from Acanthocheilonema viteae (Filarial nematode worm).